A 360-amino-acid polypeptide reads, in one-letter code: Peptide chain release factor 1 (360 aa).

Q237 is subject to N5-methylglutamine.

This sequence belongs to the prokaryotic/mitochondrial release factor family. In terms of processing, methylated by PrmC. Methylation increases the termination efficiency of RF1.

It localises to the cytoplasm. Functionally, peptide chain release factor 1 directs the termination of translation in response to the peptide chain termination codons UAG and UAA. The chain is Peptide chain release factor 1 from Pseudomonas syringae pv. tomato (strain ATCC BAA-871 / DC3000).